The sequence spans 349 residues: Methylthioribose-1-phosphate isomerase (349 aa).

Substrate is bound by residues 51–53 (RGA), Arg-94, and Gln-199. The Proton donor role is filled by Asp-240. 250–251 (NK) lines the substrate pocket.

It belongs to the EIF-2B alpha/beta/delta subunits family. MtnA subfamily. Homodimer.

It carries out the reaction 5-(methylsulfanyl)-alpha-D-ribose 1-phosphate = 5-(methylsulfanyl)-D-ribulose 1-phosphate. Its pathway is amino-acid biosynthesis; L-methionine biosynthesis via salvage pathway; L-methionine from S-methyl-5-thio-alpha-D-ribose 1-phosphate: step 1/6. Its function is as follows. Catalyzes the interconversion of methylthioribose-1-phosphate (MTR-1-P) into methylthioribulose-1-phosphate (MTRu-1-P). The sequence is that of Methylthioribose-1-phosphate isomerase from Bacillus mycoides (strain KBAB4) (Bacillus weihenstephanensis).